The primary structure comprises 266 residues: Short-chain dehydrogenase/reductase tropE (266 aa).

NADP(+)-binding residues include Leu18, Asp69, and Asn96. The active-site Proton donor is Ser147. NADP(+)-binding residues include Tyr181, Lys185, and Thr216. The active-site Proton acceptor is Tyr181. Catalysis depends on Lys185, which acts as the Lowers pKa of active site Tyr.

It belongs to the short-chain dehydrogenases/reductases (SDR) family.

Its pathway is secondary metabolite biosynthesis. In terms of biological role, short-chain dehydrogenase/reductase; part of the gene cluster that mediates the biosynthesis of the tropolone class of fungal maleic anhydrides. The pathway begins with the synthesis of 3-methylorcinaldehyde by the non-reducing polyketide synthase (PKS) tropA. 3-methylorcinaldehyde is the substrate for the FAD-dependent monooxygenase tropB to yield a dearomatized hydroxycyclohexadione. The 2-oxoglutarate-dependent dioxygenase tropC then performs the oxidative ring expansion to provide the first tropolone metabolite stipitaldehyde. Trop D converts stipitaldehyde into stipitacetal which is in turn converted to stipitalide by the short-chain dehydrogenase/reductase tropE. The next steps involve tropF, tropG, tropH, tropI and tropJ to form successive tropolone maleic anhydrides including stipitaldehydic, stipitatonic and stipitatic acids. This Talaromyces stipitatus (strain ATCC 10500 / CBS 375.48 / QM 6759 / NRRL 1006) (Penicillium stipitatum) protein is Short-chain dehydrogenase/reductase tropE.